Reading from the N-terminus, the 131-residue chain is EG45-like domain containing protein (131 aa).

The signal sequence occupies residues 1 to 24 (MGVGTKVLVITTMAICLISSAAYA). The Expansin-like EG45; incomplete domain maps to 27–131 (GTATFYTPPY…GKIKIEFNQA (105 aa)). A disulfide bond links C73 and C85.

Expressed in the outer layer of xylem and the vascular cambial zone of roots, in shoot cambium, but not in leaves.

The protein localises to the secreted. Its function is as follows. Might have a systemic role in water and solute homeostasis. Has no expansin-like activity. The chain is EG45-like domain containing protein (CjBAp12) from Citrus jambhiri (Rough lemon).